A 361-amino-acid polypeptide reads, in one-letter code: MHWITRFSAFFSAALAMILLSPSLQSFSPAAAIRSSHPYADEFKPQQNSDYSSFRESPMFRNAEQCRSSGEDSGVCNPNLVHVAITLDIDYLRGSIAAVNSILQHSMCPQSVFFHFLVSSESQNLESLIRSTFPKLTNLKIYYFAPETVQSLISSSVRQALEQPLNYARNYLADLLEPCVKRVIYLDSDLVVVDDIVKLWKTGLGQRTIGAPEYCHANFTKYFTGGFWSDKRFNGTFKGRNPCYFNTGVMVIDLKKWRQFRFTKRIEKWMEIQKIERIYELGSLPPFLLVFAGHVAPISHRWNQHGLGGDNVRGSCRDLHSGPVSLLHWSGSGKPWLRLDSKLPCPLDTLWAPYDLYKHSH.

Topologically, residues 1–6 are cytoplasmic; that stretch reads MHWITR. The chain crosses the membrane as a helical; Signal-anchor for type II membrane protein span at residues 7–27; the sequence is FSAFFSAALAMILLSPSLQSF. Residues 28 to 361 lie on the Lumenal side of the membrane; that stretch reads SPAAAIRSSH…APYDLYKHSH (334 aa). N218 and N234 each carry an N-linked (GlcNAc...) asparagine glycan.

It belongs to the glycosyltransferase 8 family.

The protein localises to the golgi apparatus membrane. The protein operates within glycan metabolism; pectin biosynthesis. In terms of biological role, may be involved in pectin and/or xylans biosynthesis in cell walls. The chain is Probable galacturonosyltransferase-like 5 (GATL5) from Arabidopsis thaliana (Mouse-ear cress).